An 809-amino-acid chain; its full sequence is Hydrazine synthase subunit alpha (809 aa).

The signal sequence occupies residues 1–27 (MGKRKLGVIASAFVAGALVCGSTLVNA). Cysteine 303 contacts Zn(2+). Residues cysteine 583 and cysteine 586 each coordinate heme. Histidine 587 contributes to the Zn(2+) binding site. Heme contacts are provided by tyrosine 591, cysteine 685, cysteine 688, histidine 689, and histidine 772. A Cytochrome c domain is found at 633–792 (KGVKHGEDVV…AIVEWIDLGA (160 aa)).

In terms of assembly, part of the hydrazine synthase complex that forms an elongated dimer of heterotrimers composed of one alpha, one beta and one gamma subunit. The cofactor is heme c.

The protein localises to the anammoxosome. It catalyses the reaction hydrazine + 3 Fe(III)-[cytochrome c] + H2O = nitric oxide + 3 Fe(II)-[cytochrome c] + NH4(+) + 2 H(+). It participates in nitrogen metabolism. Its function is as follows. Component of the hydrazine synthase complex that catalyzes the condensation of nitric oxide (NO) with ammonium to form hydrazine. The alpha subunit catalyzes the second half-reaction, i.e. the condensation of hydroxylamine formed in the active site of the gamma subunit with ammonia, yielding hydrazine. Is involved in anaerobic ammonium oxidation (anammox), a biological process in which nitrite is used as the electron acceptor in the conversion of ammonium to dinitrogen gas (N2) and water; this bacterial process has a major role in the Earth's nitrogen cycle and has been estimated to synthesize up to 50% of the dinitrogen gas emitted into our atmosphere from the oceans. The sequence is that of Hydrazine synthase subunit alpha from Kuenenia stuttgartiensis.